The chain runs to 350 residues: Beta-ketoacyl-[acyl-carrier-protein] synthase III (350 aa).

Active-site residues include C120 and H256. The tract at residues 257–261 (QANVR) is ACP-binding. N286 is an active-site residue.

It belongs to the thiolase-like superfamily. FabH family. As to quaternary structure, homodimer.

Its subcellular location is the cytoplasm. The catalysed reaction is malonyl-[ACP] + acetyl-CoA + H(+) = 3-oxobutanoyl-[ACP] + CO2 + CoA. It participates in lipid metabolism; fatty acid biosynthesis. Catalyzes the condensation reaction of fatty acid synthesis by the addition to an acyl acceptor of two carbons from malonyl-ACP. Catalyzes the first condensation reaction which initiates fatty acid synthesis and may therefore play a role in governing the total rate of fatty acid production. Possesses both acetoacetyl-ACP synthase and acetyl transacylase activities. Its substrate specificity determines the biosynthesis of branched-chain and/or straight-chain of fatty acids. The chain is Beta-ketoacyl-[acyl-carrier-protein] synthase III from Deinococcus deserti (strain DSM 17065 / CIP 109153 / LMG 22923 / VCD115).